The sequence spans 139 residues: MRIMGLDVGSKTVGVAISDPLGFTAQGLEIIRINEDKQDFGFDRLAELVKQYQVDRFVIGLPKNMNNTSGPRVEASKAYGDKIEELFHIPVSYQDERLTTVEAERMLIEQADISRGKRKKVIDKLAAQLILQNYLDCNY.

It belongs to the YqgF nuclease family.

The protein resides in the cytoplasm. Its function is as follows. Could be a nuclease involved in processing of the 5'-end of pre-16S rRNA. This Streptococcus equi subsp. equi (strain 4047) protein is Putative pre-16S rRNA nuclease.